The sequence spans 349 residues: Secretory carrier-associated membrane protein 3 (349 aa).

Residues 1–90 (MAQSRDTGNP…EPRNYGSYST (90 aa)) form a disordered region. Topologically, residues 1–168 (MAQSRDTGNP…PQEFQKTVST (168 aa)) are cytoplasmic. S32 bears the Phosphoserine mark. A Phosphothreonine modification is found at T37. Phosphotyrosine occurs at positions 41 and 53. The segment covering 49 to 68 (PPPAYEPPAPAPAPLPPPSA) has biased composition (pro residues). S74 and S78 each carry phosphoserine. The residue at position 85 (Y85) is a Phosphotyrosine. S87 is modified (phosphoserine). The next 4 helical transmembrane spans lie at 169–189 (MYYL…ACLA), 200–220 (GFGL…VCWY), 236–256 (FVFF…AIGI), and 277–297 (VAVL…LGIV). Residues 298 to 349 (MLKRIHSLYRQTGASFQKAQQEFAAGVFSNPAVRTAAANAAAGAAENAFRAP) lie on the Cytoplasmic side of the membrane. A Glycyl lysine isopeptide (Lys-Gly) (interchain with G-Cter in SUMO1) cross-link involves residue K315.

The protein belongs to the SCAMP family. As to quaternary structure, interacts with NEDD4 and NEDD4L and TSG101. Interacts with RNF126. Post-translationally, monoubiquitinated.

It localises to the membrane. Its function is as follows. Functions in post-Golgi recycling pathways. Acts as a recycling carrier to the cell surface. This is Secretory carrier-associated membrane protein 3 (Scamp3) from Mus musculus (Mouse).